Reading from the N-terminus, the 557-residue chain is Dihydroxy-acid dehydratase (557 aa).

C50 is a [2Fe-2S] cluster binding site. D82 serves as a coordination point for Mg(2+). C123 lines the [2Fe-2S] cluster pocket. Residues D124 and K125 each contribute to the Mg(2+) site. K125 carries the post-translational modification N6-carboxylysine. Residue C195 participates in [2Fe-2S] cluster binding. E447 contacts Mg(2+). The Proton acceptor role is filled by S473.

It belongs to the IlvD/Edd family. As to quaternary structure, homodimer. Requires [2Fe-2S] cluster as cofactor. It depends on Mg(2+) as a cofactor.

The catalysed reaction is (2R)-2,3-dihydroxy-3-methylbutanoate = 3-methyl-2-oxobutanoate + H2O. It carries out the reaction (2R,3R)-2,3-dihydroxy-3-methylpentanoate = (S)-3-methyl-2-oxopentanoate + H2O. The protein operates within amino-acid biosynthesis; L-isoleucine biosynthesis; L-isoleucine from 2-oxobutanoate: step 3/4. Its pathway is amino-acid biosynthesis; L-valine biosynthesis; L-valine from pyruvate: step 3/4. Functions in the biosynthesis of branched-chain amino acids. Catalyzes the dehydration of (2R,3R)-2,3-dihydroxy-3-methylpentanoate (2,3-dihydroxy-3-methylvalerate) into 2-oxo-3-methylpentanoate (2-oxo-3-methylvalerate) and of (2R)-2,3-dihydroxy-3-methylbutanoate (2,3-dihydroxyisovalerate) into 2-oxo-3-methylbutanoate (2-oxoisovalerate), the penultimate precursor to L-isoleucine and L-valine, respectively. This is Dihydroxy-acid dehydratase from Nitrosospira multiformis (strain ATCC 25196 / NCIMB 11849 / C 71).